The sequence spans 85 residues: Probable dolichol-phosphate mannosyltransferase subunit 3 (85 aa).

2 helical membrane passes run 13–33 (VLLV…LSYI) and 37–57 (AHCL…VATF).

Belongs to the DPM3 family.

The protein localises to the endoplasmic reticulum membrane. It participates in protein modification; protein glycosylation. Its function is as follows. Stabilizer subunit of the dolichol-phosphate-mannose synthase complex. This is Probable dolichol-phosphate mannosyltransferase subunit 3 from Caenorhabditis briggsae.